A 1624-amino-acid chain; its full sequence is Putative serine/threonine-protein kinase/receptor R831 (1624 aa).

A signal peptide spans 1–25; sequence MHSVYTKYTIILILLVIYQGLPTNT. 13 N-linked (GlcNAc...) asparagine; by host glycosylation sites follow: Asn152, Asn169, Asn200, Asn205, Asn225, Asn240, Asn245, Asn292, Asn364, Asn479, Asn541, Asn720, and Asn737. A helical transmembrane segment spans residues 747 to 767; that stretch reads VIPIACIFGLLLLTLLIVIIF. Positions 786–1049 constitute a Protein kinase 1 domain; sequence LEIGETLGTG…EIMTRLSNIL (264 aa). Residues 792–800 and Lys813 each bind ATP; that span reads LGTGGYGEV. The active-site Proton acceptor is the Asp908. Over residues 1054-1093 the composition is skewed to low complexity; the sequence is NMTSGTSSSSLSSGGIGKSITDSKSSNSRSSVESSNTSNT. Residues 1054-1101 form a disordered region; that stretch reads NMTSGTSSSSLSSGGIGKSITDSKSSNSRSSVESSNTSNTFRGIDRHN. In terms of domain architecture, Guanylate cyclase spans 1109–1252; the sequence is TVAFIDIISA…STVNITGKIT (144 aa). The Protein kinase 2 domain occupies 1364–1615; sequence ISIGKQIGLG…MTEVVQQLML (252 aa). Residues 1370–1378 and Lys1391 each bind ATP; that span reads IGLGSYGIV. Catalysis depends on Asp1487, which acts as the Proton acceptor.

Its subcellular location is the membrane. It catalyses the reaction L-seryl-[protein] + ATP = O-phospho-L-seryl-[protein] + ADP + H(+). The enzyme catalyses L-threonyl-[protein] + ATP = O-phospho-L-threonyl-[protein] + ADP + H(+). This is Putative serine/threonine-protein kinase/receptor R831 from Acanthamoeba polyphaga (Amoeba).